An 800-amino-acid polypeptide reads, in one-letter code: Putative antiporter subunit mnhA2 (800 aa).

20 consecutive transmembrane segments (helical) span residues Met1–Ser21, Ile33–Ala53, Gly78–Ala98, Leu118–Phe138, Phe167–Met187, Gly207–Phe227, Thr241–Leu261, Tyr273–Leu293, Gly300–Gly320, Ile331–Ile351, Leu387–Ser407, Phe424–Phe444, Pro472–Val492, Gly527–Ile547, Ile595–Leu615, Gly627–Ile647, Leu651–Met671, Leu676–Ser696, Ile712–Thr732, and Leu768–Leu788.

It belongs to the CPA3 antiporters (TC 2.A.63) subunit A family. In terms of assembly, may form a heterooligomeric complex that consists of seven subunits: mnhA2, mnhB2, mnhC2, mnhD2, mnhE2, mnhF2 and mnhG2.

The protein resides in the cell membrane. The chain is Putative antiporter subunit mnhA2 (mnhA2) from Staphylococcus aureus (strain USA300).